Reading from the N-terminus, the 330-residue chain is GTP 3',8-cyclase (330 aa).

The 217-residue stretch at 9–225 folds into the Radical SAM core domain; sequence RFGRTVNYVR…IRRHHELIPA (217 aa). GTP is bound at residue Arg18. The [4Fe-4S] cluster site is built by Cys25 and Cys29. An S-adenosyl-L-methionine-binding site is contributed by Tyr31. Cys32 serves as a coordination point for [4Fe-4S] cluster. Arg67 contacts GTP. Gly71 is a binding site for S-adenosyl-L-methionine. Thr97 contacts GTP. Ser121 contributes to the S-adenosyl-L-methionine binding site. Lys158 serves as a coordination point for GTP. Residue Met192 coordinates S-adenosyl-L-methionine. 2 residues coordinate [4Fe-4S] cluster: Cys256 and Cys259. 261 to 263 provides a ligand contact to GTP; sequence RVR. Cys273 is a [4Fe-4S] cluster binding site.

Belongs to the radical SAM superfamily. MoaA family. As to quaternary structure, monomer and homodimer. Requires [4Fe-4S] cluster as cofactor.

It carries out the reaction GTP + AH2 + S-adenosyl-L-methionine = (8S)-3',8-cyclo-7,8-dihydroguanosine 5'-triphosphate + 5'-deoxyadenosine + L-methionine + A + H(+). Its pathway is cofactor biosynthesis; molybdopterin biosynthesis. Catalyzes the cyclization of GTP to (8S)-3',8-cyclo-7,8-dihydroguanosine 5'-triphosphate. This is GTP 3',8-cyclase from Marinobacter nauticus (strain ATCC 700491 / DSM 11845 / VT8) (Marinobacter aquaeolei).